The chain runs to 359 residues: Ribosomal RNA large subunit methyltransferase M (359 aa).

Residues serine 186, 219–222 (CPGG), aspartate 238, aspartate 258, and aspartate 275 each bind S-adenosyl-L-methionine. The active-site Proton acceptor is lysine 304.

This sequence belongs to the class I-like SAM-binding methyltransferase superfamily. RNA methyltransferase RlmE family. RlmM subfamily. Monomer.

It localises to the cytoplasm. The enzyme catalyses cytidine(2498) in 23S rRNA + S-adenosyl-L-methionine = 2'-O-methylcytidine(2498) in 23S rRNA + S-adenosyl-L-homocysteine + H(+). Functionally, catalyzes the 2'-O-methylation at nucleotide C2498 in 23S rRNA. The sequence is that of Ribosomal RNA large subunit methyltransferase M from Vibrio parahaemolyticus serotype O3:K6 (strain RIMD 2210633).